Reading from the N-terminus, the 124-residue chain is Mini zinc finger protein 4 (124 aa).

Residues 35–84 (YGECRRNHAARMGGHAVDGCREFLAEGEEGTGGALRCAACGCHRSFHRRV) form a ZF-HD dimerization-type; degenerate zinc finger.

As to quaternary structure, homo- and heterodimers.

It is found in the cytoplasm. Functionally, inhibits zinc finger homeodomain (ZHD) transcription factors, by interacting with them to prevent both their nuclear localization and their DNA-binding properties. This chain is Mini zinc finger protein 4 (MIF4), found in Oryza sativa subsp. japonica (Rice).